The following is a 161-amino-acid chain: Ribosome maturation factor RimP (161 aa).

Belongs to the RimP family.

The protein resides in the cytoplasm. Its function is as follows. Required for maturation of 30S ribosomal subunits. This chain is Ribosome maturation factor RimP, found in Rickettsia africae (strain ESF-5).